The primary structure comprises 37 residues: Cytochrome bd-I ubiquinol oxidase subunit X (37 aa).

Residues 4–24 (FAWILGTLLACSFGVITALAL) traverse the membrane as a helical segment.

Belongs to the cytochrome ubiquinol oxidase subunit X family. In terms of assembly, may be a subunit of cytochrome bd-I ubiquinol oxidase. Probably interacts with CydA and CydB.

The protein localises to the cell inner membrane. It carries out the reaction 2 a ubiquinol + O2(in) + 4 H(+)(in) = 2 a ubiquinone + 2 H2O(in) + 4 H(+)(out). The protein operates within energy metabolism; oxidative phosphorylation. Required for correct functioning of cytochrome bd-I oxidase. This protein and AppX may have some functional overlap. The sequence is that of Cytochrome bd-I ubiquinol oxidase subunit X (cydX) from Escherichia coli (strain K12).